The chain runs to 235 residues: Phosphoribosylaminoimidazole-succinocarboxamide synthase (235 aa).

The protein belongs to the SAICAR synthetase family.

It carries out the reaction 5-amino-1-(5-phospho-D-ribosyl)imidazole-4-carboxylate + L-aspartate + ATP = (2S)-2-[5-amino-1-(5-phospho-beta-D-ribosyl)imidazole-4-carboxamido]succinate + ADP + phosphate + 2 H(+). The protein operates within purine metabolism; IMP biosynthesis via de novo pathway; 5-amino-1-(5-phospho-D-ribosyl)imidazole-4-carboxamide from 5-amino-1-(5-phospho-D-ribosyl)imidazole-4-carboxylate: step 1/2. This is Phosphoribosylaminoimidazole-succinocarboxamide synthase from Chloroherpeton thalassium (strain ATCC 35110 / GB-78).